The following is a 376-amino-acid chain: Putative F-box protein At1g30930 (376 aa).

The F-box domain occupies 1–44 (MKNSIPIDLIIEIVSRSTAKSVARCHCVSKQWRAIFRRKYFIEL).

In Arabidopsis thaliana (Mouse-ear cress), this protein is Putative F-box protein At1g30930.